A 346-amino-acid chain; its full sequence is Probable 3-hydroxyacyl-CoA dehydrogenase (346 aa).

Residues 322–346 (RANLSPSATPCTPWKARKATSCAPP) are disordered.

This sequence belongs to the 3-hydroxyacyl-CoA dehydrogenase family.

The enzyme catalyses a (3S)-3-hydroxyacyl-CoA + NAD(+) = a 3-oxoacyl-CoA + NADH + H(+). The sequence is that of Probable 3-hydroxyacyl-CoA dehydrogenase from Deinococcus radiodurans (strain ATCC 13939 / DSM 20539 / JCM 16871 / CCUG 27074 / LMG 4051 / NBRC 15346 / NCIMB 9279 / VKM B-1422 / R1).